The sequence spans 342 residues: Phosphate acyltransferase (342 aa).

Belongs to the PlsX family. Homodimer. Probably interacts with PlsY.

It localises to the cytoplasm. The enzyme catalyses a fatty acyl-[ACP] + phosphate = an acyl phosphate + holo-[ACP]. It functions in the pathway lipid metabolism; phospholipid metabolism. Catalyzes the reversible formation of acyl-phosphate (acyl-PO(4)) from acyl-[acyl-carrier-protein] (acyl-ACP). This enzyme utilizes acyl-ACP as fatty acyl donor, but not acyl-CoA. This chain is Phosphate acyltransferase, found in Shewanella amazonensis (strain ATCC BAA-1098 / SB2B).